A 235-amino-acid chain; its full sequence is Small ribosomal subunit protein eS4 (235 aa).

The 74-residue stretch at 37-110 (LPLGLIIRDV…KGRLVLYKLN (74 aa)) folds into the S4 RNA-binding domain.

Belongs to the eukaryotic ribosomal protein eS4 family.

This chain is Small ribosomal subunit protein eS4, found in Methanosarcina mazei (strain ATCC BAA-159 / DSM 3647 / Goe1 / Go1 / JCM 11833 / OCM 88) (Methanosarcina frisia).